The following is a 334-amino-acid chain: B1 bradykinin receptor (334 aa).

The tract at residues 1–21 (MASQASLKLQPSNQSQQAPPN) is disordered. The Extracellular segment spans residues 1 to 41 (MASQASLKLQPSNQSQQAPPNITSCEGAPEAWDLLCRVLPG). A compositionally biased stretch (low complexity) spans 10–21 (QPSNQSQQAPPN). Asn13 and Asn21 each carry an N-linked (GlcNAc...) asparagine glycan. A helical membrane pass occupies residues 42 to 62 (FVITVCFFGLLGNLLVLSFFL). The Cytoplasmic portion of the chain corresponds to 63-80 (LPWRRWWQQRRQRLTIAE). Residues 81–101 (IYLANLAASDLVFVLGLPFWA) form a helical membrane-spanning segment. Residues 102-118 (ENVGNRFNWPFGSDLCR) lie on the Extracellular side of the membrane. The cysteines at positions 117 and 196 are disulfide-linked. Residues 119–139 (VVSGVIKANLFISIFLVVAIS) form a helical membrane-spanning segment. Residues 140–161 (QDRYRLLVYPMTSWGNRRRRQA) lie on the Cytoplasmic side of the membrane. Residues 162–182 (QVTCLLIWVAGGLLSTPTFLL) traverse the membrane as a helical segment. The Extracellular segment spans residues 183–214 (RSVKVVPDLNISACILLFPHEAWHFVRMVELN). N-linked (GlcNAc...) asparagine glycosylation occurs at Asn192. A helical membrane pass occupies residues 215–235 (VLGFLLPLAAILYFNFHILAS). Topologically, residues 236–258 (LRGQKEASRTRCGGPKDSKTMGL) are cytoplasmic. A helical membrane pass occupies residues 259-279 (ILTLVASFLVCWAPYHFFAFL). Residues 280-302 (DFLVQVRVIQDCFWKELTDLGLQ) lie on the Extracellular side of the membrane. Residues 303 to 323 (LANFFAFVNSCLNPLIYVFAG) traverse the membrane as a helical segment. At 324-334 (RLFKTRVLGTL) the chain is on the cytoplasmic side.

It belongs to the G-protein coupled receptor 1 family. Bradykinin receptor subfamily. BDKRB1 sub-subfamily. In terms of tissue distribution, expressed in heart, liver and lung.

It is found in the cell membrane. In terms of biological role, this is a receptor for bradykinin. Could be a factor in chronic pain and inflammation. The sequence is that of B1 bradykinin receptor (Bdkrb1) from Mus musculus (Mouse).